Reading from the N-terminus, the 358-residue chain is Hydroxyproline O-arabinosyltransferase 3 (358 aa).

Residues 8 to 28 traverse the membrane as a helical; Signal-anchor segment; it reads LLFLLGFGFFVVTYNLLTLIV.

In terms of tissue distribution, ubiquitous.

It localises to the golgi apparatus. Its subcellular location is the cis-Golgi network membrane. It catalyses the reaction trans-4-hydroxy-L-prolyl-[protein] + UDP-beta-L-arabinofuranose = O-(beta-L-arabinofuranosyl)-trans-4-hydroxy-L-prolyl-[protein] + UDP + H(+). In terms of biological role, glycosyltransferase involved in the O-arabinosylation of several proteins including extensins and small signaling peptides. Catalyzes the transfer of the initial L-arabinose to the hydroxyl group of Hyp residues. Contributes redundantly with HPAT1 and HPAT2 to arabinosylation of EXT3, but main contributor to arabinosylation of CLE peptides. The protein is Hydroxyproline O-arabinosyltransferase 3 of Arabidopsis thaliana (Mouse-ear cress).